The following is a 757-amino-acid chain: Amine oxidase [copper-containing] 2 (757 aa).

Topologically, residues 1 to 4 (MNLK) are cytoplasmic. Residues 5–25 (VLLLLLGLSFLTVFALVYVLL) traverse the membrane as a helical segment. Residues 26-757 (TRQGSFSQSP…NLPSFSYEGL (732 aa)) are Extracellular-facing. 3 N-linked (GlcNAc...) asparagine glycosylation sites follow: asparagine 133, asparagine 198, and asparagine 226. The active-site Proton acceptor is aspartate 381. Cysteine 399 and cysteine 425 are joined by a disulfide. Residue tyrosine 466 is the Schiff-base intermediate with substrate; via topaquinone of the active site. A 2',4',5'-topaquinone modification is found at tyrosine 466. Cu(2+) is bound by residues histidine 517 and histidine 519. The Ca(2+) site is built by aspartate 526, leucine 527, aspartate 528, glutamate 569, glutamate 638, phenylalanine 660, and asparagine 662. N-linked (GlcNAc...) asparagine glycosylation is present at asparagine 663. Positions 664, 670, and 671 each coordinate Ca(2+). Histidine 681 is a binding site for Cu(2+). A disulfide bridge links cysteine 731 with cysteine 738.

It belongs to the copper/topaquinone oxidase family. Homodimer; disulfide-linked. Probably forms heterodimers with AOC3. Requires Cu(2+) as cofactor. Ca(2+) is required as a cofactor. It depends on L-topaquinone as a cofactor. Post-translationally, topaquinone (TPQ) is generated by copper-dependent autoxidation of a specific tyrosyl residue. As to expression, significantly much highly expressed in retina.

Its subcellular location is the cell membrane. The enzyme catalyses 2-phenylethylamine + O2 + H2O = 2-phenylacetaldehyde + H2O2 + NH4(+). It carries out the reaction tryptamine + O2 + H2O = indole-3-acetaldehyde + H2O2 + NH4(+). It catalyses the reaction tyramine + O2 + H2O = (4-hydroxyphenyl)acetaldehyde + H2O2 + NH4(+). Catalyzes the oxidative deamination of primary amines to the corresponding aldehydes with the concomitant production of hydrogen peroxide and ammonia. Has a preference for 2-phenylethylamine, tryptamine and tyramine. Could also act on methylamine and benzylamine but much less efficiently. The protein is Amine oxidase [copper-containing] 2 of Mus musculus (Mouse).